A 285-amino-acid chain; its full sequence is Nucleotide-binding protein PSPTO_4456 (285 aa).

Residue 8-15 coordinates ATP; it reads GRSGSGKS. 60 to 63 is a GTP binding site; it reads DARN.

It belongs to the RapZ-like family.

Displays ATPase and GTPase activities. In Pseudomonas syringae pv. tomato (strain ATCC BAA-871 / DC3000), this protein is Nucleotide-binding protein PSPTO_4456.